A 349-amino-acid polypeptide reads, in one-letter code: Isopentenyl-diphosphate delta-isomerase (349 aa).

Residue 8–9 (RK) participates in substrate binding. Residues serine 66, 67 to 69 (SMT), serine 97, and asparagine 125 contribute to the FMN site. 97–99 (STR) contributes to the substrate binding site. Glutamine 160 is a substrate binding site. Glutamate 161 serves as a coordination point for Mg(2+). Residues lysine 192, threonine 222, 272–274 (GMK), and 293–294 (AR) contribute to the FMN site.

The protein belongs to the IPP isomerase type 2 family. In terms of assembly, homooctamer. Dimer of tetramers. Requires FMN as cofactor. NADPH is required as a cofactor. Mg(2+) serves as cofactor.

It is found in the cytoplasm. It catalyses the reaction isopentenyl diphosphate = dimethylallyl diphosphate. Its function is as follows. Involved in the biosynthesis of isoprenoids. Catalyzes the 1,3-allylic rearrangement of the homoallylic substrate isopentenyl (IPP) to its allylic isomer, dimethylallyl diphosphate (DMAPP). This is Isopentenyl-diphosphate delta-isomerase from Oceanobacillus iheyensis (strain DSM 14371 / CIP 107618 / JCM 11309 / KCTC 3954 / HTE831).